The chain runs to 164 residues: UPF0225 protein Shewmr7_1921 (164 aa).

The protein belongs to the UPF0225 family.

The sequence is that of UPF0225 protein Shewmr7_1921 from Shewanella sp. (strain MR-7).